The sequence spans 344 residues: Phenylalanine--tRNA ligase alpha subunit (344 aa).

E256 serves as a coordination point for Mg(2+).

The protein belongs to the class-II aminoacyl-tRNA synthetase family. Phe-tRNA synthetase alpha subunit type 1 subfamily. As to quaternary structure, tetramer of two alpha and two beta subunits. Mg(2+) is required as a cofactor.

Its subcellular location is the cytoplasm. It catalyses the reaction tRNA(Phe) + L-phenylalanine + ATP = L-phenylalanyl-tRNA(Phe) + AMP + diphosphate + H(+). This chain is Phenylalanine--tRNA ligase alpha subunit, found in Bacillus pumilus (strain SAFR-032).